A 147-amino-acid chain; its full sequence is Myoglobin (147 aa).

The Globin domain maps to 2–141; sequence ADFDMVLKCW…IIADMEADYK (140 aa). His-60 serves as a coordination point for nitrite. O2 is bound at residue His-60. His-89 contributes to the heme b binding site.

Belongs to the globin family. As to quaternary structure, monomeric.

The protein resides in the cytoplasm. It is found in the sarcoplasm. It catalyses the reaction Fe(III)-heme b-[protein] + nitric oxide + H2O = Fe(II)-heme b-[protein] + nitrite + 2 H(+). The enzyme catalyses H2O2 + AH2 = A + 2 H2O. Monomeric heme protein which primary function is to store oxygen and facilitate its diffusion within muscle tissues. Reversibly binds oxygen through a pentacoordinated heme iron and enables its timely and efficient release as needed during periods of heightened demand. Depending on the oxidative conditions of tissues and cells, and in addition to its ability to bind oxygen, it also has a nitrite reductase activity whereby it regulates the production of bioactive nitric oxide. Under stress conditions, like hypoxia and anoxia, it also protects cells against reactive oxygen species thanks to its pseudoperoxidase activity. The polypeptide is Myoglobin (mb) (Pseudochaenichthys georgianus (South Georgia icefish)).